The chain runs to 193 residues: Phosphoheptose isomerase (193 aa).

The 157-residue stretch at 37-193 folds into the SIS domain; the sequence is LADSFKAGGK…QLIEKEMVKA (157 aa). 52–54 lines the substrate pocket; sequence NGG. Positions 61 and 65 each coordinate Zn(2+). Substrate is bound by residues E65, 93–94, 119–121, S124, and Q172; these read ND and STS. The Zn(2+) site is built by Q172 and H180.

This sequence belongs to the SIS family. GmhA subfamily. In terms of assembly, homotetramer. Zn(2+) is required as a cofactor.

The protein resides in the cytoplasm. It carries out the reaction 2 D-sedoheptulose 7-phosphate = D-glycero-alpha-D-manno-heptose 7-phosphate + D-glycero-beta-D-manno-heptose 7-phosphate. It functions in the pathway carbohydrate biosynthesis; D-glycero-D-manno-heptose 7-phosphate biosynthesis; D-glycero-alpha-D-manno-heptose 7-phosphate and D-glycero-beta-D-manno-heptose 7-phosphate from sedoheptulose 7-phosphate: step 1/1. Its function is as follows. Catalyzes the isomerization of sedoheptulose 7-phosphate in D-glycero-D-manno-heptose 7-phosphate. This chain is Phosphoheptose isomerase, found in Yersinia pseudotuberculosis serotype O:1b (strain IP 31758).